Reading from the N-terminus, the 341-residue chain is NADH-quinone oxidoreductase subunit H 2 (341 aa).

8 helical membrane-spanning segments follow: residues Ile-13–Ile-33, Gly-82–Ile-102, Val-115–Gly-135, Ile-161–Val-181, Met-190–Leu-210, Tyr-248–Pro-268, Trp-277–Met-297, and Val-317–Gly-337.

This sequence belongs to the complex I subunit 1 family. NDH-1 is composed of 14 different subunits. Subunits NuoA, H, J, K, L, M, N constitute the membrane sector of the complex.

The protein localises to the cell inner membrane. The enzyme catalyses a quinone + NADH + 5 H(+)(in) = a quinol + NAD(+) + 4 H(+)(out). In terms of biological role, NDH-1 shuttles electrons from NADH, via FMN and iron-sulfur (Fe-S) centers, to quinones in the respiratory chain. The immediate electron acceptor for the enzyme in this species is believed to be ubiquinone. Couples the redox reaction to proton translocation (for every two electrons transferred, four hydrogen ions are translocated across the cytoplasmic membrane), and thus conserves the redox energy in a proton gradient. This subunit may bind ubiquinone. In Rhodopseudomonas palustris (strain BisB5), this protein is NADH-quinone oxidoreductase subunit H 2.